The chain runs to 212 residues: Endothelin-1 (212 aa).

A signal peptide spans 1–17 (MDYLLMIFSLLFVACQG). The propeptide occupies 18–50 (APETAVLGAELSAVGENGGEKPTPSPPWRLRRS). Cystine bridges form between Cys-53–Cys-67 and Cys-55–Cys-63. The propeptide occupies 74-212 (VNTPEHVVPY…RYVTHNRAHW (139 aa)). Positions 109-123 (CQCASQKDKKCWNFC) are endothelin-like. Composition is skewed to basic and acidic residues over residues 168-181 (RSSE…RSET) and 189-205 (SFHD…ERYV). The disordered stretch occupies residues 168 to 212 (RSSEEHLRQTRSETMRNSVKSSFHDPKLKGKPSRERYVTHNRAHW).

It belongs to the endothelin/sarafotoxin family. Expressed in lung, placental stem villi vessels and in cultured placental vascular smooth muscle cells.

The protein resides in the secreted. Its function is as follows. Endothelins are endothelium-derived vasoconstrictor peptides. Probable ligand for G-protein coupled receptors EDNRA and EDNRB which activates PTK2B, BCAR1, BCAR3 and, GTPases RAP1 and RHOA cascade in glomerular mesangial cells. Also binds the DEAR/FBXW7-AS1 receptor. Promotes mesenteric arterial wall remodeling via activation of ROCK signaling and subsequent colocalization of NFATC3 with F-actin filaments. NFATC3 then translocates to the nucleus where it subsequently promotes the transcription of the smooth muscle hypertrophy and differentiation marker ACTA2. This Homo sapiens (Human) protein is Endothelin-1 (EDN1).